The chain runs to 885 residues: Envelope glycoprotein gp160 (885 aa).

The signal sequence occupies residues 1–23 (MGCLGNQLLIALLLVSVLEICCV). The Extracellular portion of the chain corresponds to 24-700 (QYVTVFYGVP…TSWIRYIQYG (677 aa)). N37 is a glycosylation site (N-linked (GlcNAc...) asparagine; by host). C44 and C57 are joined by a disulfide. N70, N114, N148, N156, N173, N186, N201, N213, N245, N255, N279, N285, N296, N307, N317, N372, and N378 each carry an N-linked (GlcNAc...) asparagine; by host glycan. Intrachain disulfides connect C101–C221, C108–C212, C113–C170, C234–C264, and C244–C256. A V1 region spans residues 113–169 (CNKTETDRWGLTGNAGTTTTAITTTATPSVAENVINESNPCIKNNSCAGLEQEPMIG). The interval 170–212 (CKFNMTGLNRDKKKEYNETWYSRDLICEQSANESESKCYMHHC) is V2. The tract at residues 312–344 (CRRPENKTVLPVTIMSGLVFHSQPINERPKQAW) is V3. The cysteines at positions 312 and 345 are disulfide-linked. Intrachain disulfides connect C396–C465 and C403–C438. Residues 403-438 (CKMNWFLNWVEDRDQKGGRWKQQNRKEQQKKNYVPC) form a V4 region. N466, N482, and N485 each carry an N-linked (GlcNAc...) asparagine; by host glycan. Residues 481 to 488 (SNETNITM) are V5. The fusion peptide stretch occupies residues 532–552 (GVFVLGFLGFLATAGSAMGAA). An immunosuppression region spans residues 595–611 (LQTRVTAIEKYLKDQAQ). N-linked (GlcNAc...) asparagine; by host glycosylation is found at N631, N640, and N656. Residues 640–672 (NMTWQEWERQVDFLEANITQLLEEAQIQQEKNM) adopt a coiled-coil conformation. An MPER; binding to GalCer region spans residues 677 to 698 (KLNSWDIFGNWFDLTSWIRYIQ). A helical membrane pass occupies residues 701-721 (VLIVLGVIGLRIVIYVVQMLA). At 722 to 885 (RLRQGYRPVF…IRQGLELTLL (164 aa)) the chain is on the cytoplasmic side. A YXXV motif; contains endocytosis signal motif is present at residues 727–730 (YRPV). A disordered region spans residues 743–764 (IHKGQEPPTKEGEEGDGGDRGG). Positions 745–764 (KGQEPPTKEGEEGDGGDRGG) are enriched in basic and acidic residues. The S-palmitoyl cysteine; by host moiety is linked to residue C793. The Di-leucine internalization motif motif lies at 884–885 (LL).

In terms of assembly, the mature envelope protein (Env) consists of a homotrimer of non-covalently associated gp120-gp41 heterodimers. The resulting complex protrudes from the virus surface as a spike. Interacts with host CD4 and CCR5. Gp120 also interacts with the C-type lectins CD209/DC-SIGN and CLEC4M/DC-SIGNR (collectively referred to as DC-SIGN(R)). As to quaternary structure, the mature envelope protein (Env) consists of a homotrimer of non-covalently associated gp120-gp41 heterodimers. The resulting complex protrudes from the virus surface as a spike. Post-translationally, specific enzymatic cleavages in vivo yield mature proteins. Envelope glycoproteins are synthesized as an inactive precursor that is heavily N-glycosylated and processed likely by host cell furin in the Golgi to yield the mature SU and TM proteins. The cleavage site between SU and TM requires the minimal sequence [KR]-X-[KR]-R. In terms of processing, palmitoylation of the transmembrane protein and of Env polyprotein (prior to its proteolytic cleavage) is essential for their association with host cell membrane lipid rafts. Palmitoylation is therefore required for envelope trafficking to classical lipid rafts, but not for viral replication.

The protein localises to the virion membrane. It localises to the host cell membrane. Its subcellular location is the host endosome membrane. Functionally, the surface protein gp120 (SU) attaches the virus to the host lymphoid cell by binding to the primary receptor CD4. This interaction induces a structural rearrangement creating a high affinity binding site for a chemokine coreceptor like CCR5. This peculiar 2 stage receptor-interaction strategy allows gp120 to maintain the highly conserved coreceptor-binding site in a cryptic conformation, protected from neutralizing antibodies. These changes are transmitted to the transmembrane protein gp41 and are thought to activate its fusogenic potential by unmasking its fusion peptide. Its function is as follows. Surface protein gp120 (SU) may target the virus to gut-associated lymphoid tissue (GALT) by binding host ITGA4/ITGB7 (alpha-4/beta-7 integrins), a complex that mediates T-cell migration to the GALT. Interaction between gp120 and ITGA4/ITGB7 would allow the virus to enter GALT early in the infection, infecting and killing most of GALT's resting CD4+ T-cells. This T-cell depletion is believed to be the major insult to the host immune system leading to AIDS. The surface protein gp120 is a ligand for CD209/DC-SIGN and CLEC4M/DC-SIGNR, which are respectively found on dendritic cells (DCs), and on endothelial cells of liver sinusoids and lymph node sinuses. These interactions allow capture of viral particles at mucosal surfaces by these cells and subsequent transmission to permissive cells. DCs are professional antigen presenting cells, critical for host immunity by inducing specific immune responses against a broad variety of pathogens. They act as sentinels in various tissues where they take up antigen, process it, and present it to T-cells following migration to lymphoid organs. SIV subverts the migration properties of dendritic cells to gain access to CD4+ T-cells in lymph nodes. Virus transmission to permissive T-cells occurs either in trans (without DCs infection, through viral capture and transmission), or in cis (following DCs productive infection, through the usual CD4-gp120 interaction), thereby inducing a robust infection. In trans infection, bound virions remain infectious over days and it is proposed that they are not degraded, but protected in non-lysosomal acidic organelles within the DCs close to the cell membrane thus contributing to the viral infectious potential during DCs' migration from the periphery to the lymphoid tissues. On arrival at lymphoid tissues, intact virions recycle back to DCs' cell surface allowing virus transmission to CD4+ T-cells. Virion capture also seems to lead to MHC-II-restricted viral antigen presentation, and probably to the activation of SIV-specific CD4+ cells. In terms of biological role, the transmembrane protein gp41 (TM) acts as a class I viral fusion protein. Under the current model, the protein has at least 3 conformational states: pre-fusion native state, pre-hairpin intermediate state, and post-fusion hairpin state. During fusion of viral and target intracellular membranes, the coiled coil regions (heptad repeats) assume a trimer-of-hairpins structure, positioning the fusion peptide in close proximity to the C-terminal region of the ectodomain. The formation of this structure appears to drive apposition and subsequent fusion of viral and target cell membranes. Complete fusion occurs in host cell endosomes. The virus undergoes clathrin-dependent internalization long before endosomal fusion, thus minimizing the surface exposure of conserved viral epitopes during fusion and reducing the efficacy of inhibitors targeting these epitopes. Membranes fusion leads to delivery of the nucleocapsid into the cytoplasm. Functionally, the envelope glycoprotein gp160 precursor down-modulates cell surface CD4 antigen by interacting with it in the endoplasmic reticulum and blocking its transport to the cell surface. Its function is as follows. The gp120-gp41 heterodimer allows rapid transcytosis of the virus through CD4 negative cells such as simple epithelial monolayers of the intestinal, rectal and endocervical epithelial barriers. Both gp120 and gp41 specifically recognize glycosphingolipids galactosyl-ceramide (GalCer) or 3' sulfo-galactosyl-ceramide (GalS) present in the lipid rafts structures of epithelial cells. Binding to these alternative receptors allows the rapid transcytosis of the virus through the epithelial cells. This transcytotic vesicle-mediated transport of virions from the apical side to the basolateral side of the epithelial cells does not involve infection of the cells themselves. This chain is Envelope glycoprotein gp160 (env), found in Cercopithecidae (Old World monkeys).